The primary structure comprises 349 residues: Putative F-box/LRR-repeat protein At3g16555 (349 aa).

The region spanning 1 to 48 (MVLLPWELEEDILSRLPPRSLVQFRSVCKRWNALFDVKSFNKDQFARA) is the F-box domain. The stretch at 267–290 (VVWISLLTLPPNNLPNLFIVCYGI) is one LRR repeat.

The chain is Putative F-box/LRR-repeat protein At3g16555 from Arabidopsis thaliana (Mouse-ear cress).